The primary structure comprises 296 residues: Acetylglutamate kinase (296 aa).

Substrate-binding positions include 69-70, Arg-91, and Asn-193; that span reads GG.

It belongs to the acetylglutamate kinase family. ArgB subfamily.

It is found in the cytoplasm. It catalyses the reaction N-acetyl-L-glutamate + ATP = N-acetyl-L-glutamyl 5-phosphate + ADP. The protein operates within amino-acid biosynthesis; L-arginine biosynthesis; N(2)-acetyl-L-ornithine from L-glutamate: step 2/4. In terms of biological role, catalyzes the ATP-dependent phosphorylation of N-acetyl-L-glutamate. This Albidiferax ferrireducens (strain ATCC BAA-621 / DSM 15236 / T118) (Rhodoferax ferrireducens) protein is Acetylglutamate kinase.